The following is a 325-amino-acid chain: Zinc metalloproteinase/disintegrin (325 aa).

The propeptide occupies 1 to 39 (KYENVEKGDEAPKKCGVTHTNLESDEPIEKASQLFGTSE). Pyrrolidone carboxylic acid is present on Q40. The Peptidase M12B domain occupies 46–242 (RHIELVIVAD…HNPQRILNEP (197 aa)). H182 contributes to the Zn(2+) binding site. E183 is a catalytic residue. Zn(2+)-binding residues include H186 and H192. 2 cysteine pairs are disulfide-bonded: C197–C221 and C199–C204. Positions 243 to 257 (LRTDTVSTPVYGNVL) are excised as a propeptide. Residues 250–322 (TPVYGNVLQN…SECESNPWNF (73 aa)) form the Disintegrin domain. Q258 bears the Pyrrolidone carboxylic acid mark. Intrachain disulfides connect C264-C287, C278-C284, C283-C308, and C296-C315. A Cell attachment site motif is present at residues 300-302 (RGD).

The protein belongs to the venom metalloproteinase (M12B) family. P-II subfamily. P-IIe sub-subfamily. As to quaternary structure, heterodimer of bitisgabonin and gabonin-1 (bitisgabonin-1) or gabonin-2 (bitisgabonin-2); disulfide-linked. The cofactor is Zn(2+). As to expression, expressed by the venom gland.

The protein resides in the secreted. Impairs hemostasis in the envenomed animal. Functionally, in dimer with gabonin-1 (bitisgabonin-1), is a potent inhibitor of the adhesion of the RGD-dependent integrin alpha-5/beta-1 (ITGA5/ITGB1) to immobilized fibronectin. Its function is as follows. In dimer with gabonin-2 (bitisgabonin-2), preferentially inhibits the adhesion of the alpha-4/beta-1 (ITGA4/ITGB1) and alpha-9/beta-1 (ITGA9/ITGB1) integrins to VCAM-1 and also acts as a strong antagonist of alpha-5/beta-1 (ITGA5/ITGB1). This is Zinc metalloproteinase/disintegrin from Bitis gabonica (Gaboon adder).